The following is a 247-amino-acid chain: Uridylate kinase (247 aa).

Position 18–21 (18–21 (KLSG)) interacts with ATP. Glycine 60 provides a ligand contact to UMP. Positions 61 and 65 each coordinate ATP. UMP is bound by residues aspartate 80 and 141-148 (TGNPFFTT). ATP contacts are provided by threonine 168, tyrosine 174, and aspartate 177.

The protein belongs to the UMP kinase family. Homohexamer.

The protein localises to the cytoplasm. It catalyses the reaction UMP + ATP = UDP + ADP. Its pathway is pyrimidine metabolism; CTP biosynthesis via de novo pathway; UDP from UMP (UMPK route): step 1/1. With respect to regulation, inhibited by UTP. In terms of biological role, catalyzes the reversible phosphorylation of UMP to UDP. The sequence is that of Uridylate kinase from Pseudomonas fluorescens (strain ATCC BAA-477 / NRRL B-23932 / Pf-5).